We begin with the raw amino-acid sequence, 153 residues long: Ribosome maturation factor RimP (153 aa).

Belongs to the RimP family.

It is found in the cytoplasm. Its function is as follows. Required for maturation of 30S ribosomal subunits. This chain is Ribosome maturation factor RimP, found in Pelotomaculum thermopropionicum (strain DSM 13744 / JCM 10971 / SI).